The primary structure comprises 367 residues: Phosphoribosylaminoimidazole-succinocarboxamide synthase (367 aa).

The protein belongs to the SAICAR synthetase family.

It catalyses the reaction 5-amino-1-(5-phospho-D-ribosyl)imidazole-4-carboxylate + L-aspartate + ATP = (2S)-2-[5-amino-1-(5-phospho-beta-D-ribosyl)imidazole-4-carboxamido]succinate + ADP + phosphate + 2 H(+). The protein operates within purine metabolism; IMP biosynthesis via de novo pathway; 5-amino-1-(5-phospho-D-ribosyl)imidazole-4-carboxamide from 5-amino-1-(5-phospho-D-ribosyl)imidazole-4-carboxylate: step 1/2. In Vibrio parahaemolyticus serotype O3:K6 (strain RIMD 2210633), this protein is Phosphoribosylaminoimidazole-succinocarboxamide synthase.